The chain runs to 150 residues: Dihydroneopterin triphosphate diphosphatase (150 aa).

Residues 5-146 (VYKRPVSILV…SNRQAIEQFV (142 aa)) form the Nudix hydrolase domain. Substrate contacts are provided by Lys-7, Arg-29, and Thr-40. Positions 41 to 62 (GSVEEGETAPQAAMREVKEEVT) match the Nudix box motif. Glu-56 and Glu-60 together coordinate Mg(2+). Position 81–84 (81–84 (FEIF)) interacts with substrate. Glu-117 contributes to the Mg(2+) binding site. Ser-135 is a binding site for substrate.

Belongs to the Nudix hydrolase family. Mg(2+) is required as a cofactor.

It catalyses the reaction 7,8-dihydroneopterin 3'-triphosphate + H2O = 7,8-dihydroneopterin 3'-phosphate + diphosphate + H(+). Catalyzes the hydrolysis of dihydroneopterin triphosphate to dihydroneopterin monophosphate and pyrophosphate. Required for efficient folate biosynthesis. Can also hydrolyze nucleoside triphosphates with a preference for dATP. This Escherichia coli O157:H7 protein is Dihydroneopterin triphosphate diphosphatase (nudB).